Consider the following 461-residue polypeptide: Bifunctional protein GlmU (461 aa).

A pyrophosphorylase region spans residues methionine 1–arginine 243. Residues leucine 24–glycine 27, lysine 38, glutamine 86, glycine 91–threonine 92, tyrosine 112–aspartate 114, glycine 155, glutamate 169, asparagine 184, and asparagine 241 contribute to the UDP-N-acetyl-alpha-D-glucosamine site. Residue aspartate 114 coordinates Mg(2+). Mg(2+) is bound at residue asparagine 241. Positions alanine 244–glycine 264 are linker. Residues glycine 265–glycine 461 form an N-acetyltransferase region. The UDP-N-acetyl-alpha-D-glucosamine site is built by arginine 330 and lysine 348. Residue histidine 360 is the Proton acceptor of the active site. UDP-N-acetyl-alpha-D-glucosamine contacts are provided by tyrosine 363 and asparagine 374. Acetyl-CoA contacts are provided by residues alanine 377, asparagine 383–tyrosine 384, serine 402, alanine 420, and arginine 437.

This sequence in the N-terminal section; belongs to the N-acetylglucosamine-1-phosphate uridyltransferase family. In the C-terminal section; belongs to the transferase hexapeptide repeat family. In terms of assembly, homotrimer. The cofactor is Mg(2+).

The protein resides in the cytoplasm. It carries out the reaction alpha-D-glucosamine 1-phosphate + acetyl-CoA = N-acetyl-alpha-D-glucosamine 1-phosphate + CoA + H(+). The catalysed reaction is N-acetyl-alpha-D-glucosamine 1-phosphate + UTP + H(+) = UDP-N-acetyl-alpha-D-glucosamine + diphosphate. It participates in nucleotide-sugar biosynthesis; UDP-N-acetyl-alpha-D-glucosamine biosynthesis; N-acetyl-alpha-D-glucosamine 1-phosphate from alpha-D-glucosamine 6-phosphate (route II): step 2/2. Its pathway is nucleotide-sugar biosynthesis; UDP-N-acetyl-alpha-D-glucosamine biosynthesis; UDP-N-acetyl-alpha-D-glucosamine from N-acetyl-alpha-D-glucosamine 1-phosphate: step 1/1. The protein operates within bacterial outer membrane biogenesis; LPS lipid A biosynthesis. Its function is as follows. Catalyzes the last two sequential reactions in the de novo biosynthetic pathway for UDP-N-acetylglucosamine (UDP-GlcNAc). The C-terminal domain catalyzes the transfer of acetyl group from acetyl coenzyme A to glucosamine-1-phosphate (GlcN-1-P) to produce N-acetylglucosamine-1-phosphate (GlcNAc-1-P), which is converted into UDP-GlcNAc by the transfer of uridine 5-monophosphate (from uridine 5-triphosphate), a reaction catalyzed by the N-terminal domain. The sequence is that of Bifunctional protein GlmU from Gluconacetobacter diazotrophicus (strain ATCC 49037 / DSM 5601 / CCUG 37298 / CIP 103539 / LMG 7603 / PAl5).